A 392-amino-acid polypeptide reads, in one-letter code: Pannexin-3 (392 aa).

Topologically, residues 1 to 39 (MSLAHTAAEYMLSDALLPDRRGSRLKGLRLELPLDKMVK) are cytoplasmic. The chain crosses the membrane as a helical span at residues 40–60 (FVTVGFPLLLMSLAFAQEFSS). Over 61 to 113 (GSPISCFSPSNFSVRQAVFVDSSCWDSLAHYKQDEAGQYTVKSLWPHKALPYS) the chain is Extracellular. N71 carries an N-linked (GlcNAc...) asparagine glycan. The chain crosses the membrane as a helical span at residues 114–134 (LLALAVAMYLPVLLWQYAAVP). The Cytoplasmic portion of the chain corresponds to 135–215 (ALSSDLLFII…VATYLLRNAL (81 aa)). Residues 216-236 (LLLFTSATYLYLGHFHLDVFF) form a helical membrane-spanning segment. Residues 237–267 (QEEFSCSIKTGLLHEETHVPELITCRLTSLS) lie on the Extracellular side of the membrane. Residues 268 to 288 (VFQIVSVSSVAIYTVLVPVII) form a helical membrane-spanning segment. Residues 289–392 (YNLTRLCRWD…LTQHTYDEHP (104 aa)) lie on the Cytoplasmic side of the membrane.

This sequence belongs to the pannexin family. Homoheptameric. In terms of tissue distribution, skin.

The protein resides in the cell membrane. Its subcellular location is the cell junction. It localises to the gap junction. It is found in the endoplasmic reticulum membrane. The catalysed reaction is Ca(2+)(in) = Ca(2+)(out). It catalyses the reaction ATP(in) = ATP(out). In terms of biological role, regulator of osteoblast differentiation by functionning as a Ca(2+) channel in the endoplasmic reticulum which regulates calmodulin (CaM) pathways. Allows ATP release into the extracellular space and activation or purinergic receptors. This is Pannexin-3 (Panx3) from Rattus norvegicus (Rat).